The chain runs to 387 residues: 3-ketoacyl-CoA thiolase (387 aa).

Cysteine 91 (acyl-thioester intermediate) is an active-site residue. Catalysis depends on proton acceptor residues histidine 343 and cysteine 373.

This sequence belongs to the thiolase-like superfamily. Thiolase family. As to quaternary structure, heterotetramer of two alpha chains (FadB) and two beta chains (FadA).

It is found in the cytoplasm. It carries out the reaction an acyl-CoA + acetyl-CoA = a 3-oxoacyl-CoA + CoA. The protein operates within lipid metabolism; fatty acid beta-oxidation. In terms of biological role, catalyzes the final step of fatty acid oxidation in which acetyl-CoA is released and the CoA ester of a fatty acid two carbons shorter is formed. This Vibrio vulnificus (strain CMCP6) protein is 3-ketoacyl-CoA thiolase.